A 141-amino-acid polypeptide reads, in one-letter code: Large ribosomal subunit protein uL11 (141 aa).

The protein belongs to the universal ribosomal protein uL11 family. As to quaternary structure, part of the ribosomal stalk of the 50S ribosomal subunit. Interacts with L10 and the large rRNA to form the base of the stalk. L10 forms an elongated spine to which L12 dimers bind in a sequential fashion forming a multimeric L10(L12)X complex. Post-translationally, one or more lysine residues are methylated.

Forms part of the ribosomal stalk which helps the ribosome interact with GTP-bound translation factors. The polypeptide is Large ribosomal subunit protein uL11 (Chlorobium phaeobacteroides (strain DSM 266 / SMG 266 / 2430)).